A 304-amino-acid polypeptide reads, in one-letter code: Small glutamine-rich tetratricopeptide repeat-containing protein beta (304 aa).

4 TPR repeats span residues 15–49, 85–118, 119–152, and 153–186; these read LREQSQMDTYTSDEQESLEVAIQCLETVFKISPED, ADQLKDEGNNHMKEENYAAAVDCYTQAIELDPNN, AVYYCNRAAAQSKLGHYTDAIKDCEKAIAIDSKY, and SKAYGRMGLALTALNKFEEAVTSYQKALDLDPEN. The residue at position 131 (lysine 131) is an N6-acetyllysine. Residues serine 293, serine 295, and serine 297 each carry the phosphoserine modification.

Belongs to the SGT family. In terms of assembly, homooligomerize.

In terms of biological role, co-chaperone that binds directly to HSC70 and HSP70 and regulates their ATPase activity. The chain is Small glutamine-rich tetratricopeptide repeat-containing protein beta (SGTB) from Homo sapiens (Human).